The sequence spans 379 residues: Multicilin (379 aa).

Residues 1–129 (MQACEGSAAG…AMDDLIADSS (129 aa)) form a necessary and sufficient for its degradation during the cell cycle region. Disordered regions lie at residues 26–71 (SRRT…APLP) and 88–107 (LGTEASPSGDSSASQNPSLQ). Residues 92–107 (ASPSGDSSASQNPSLQ) are compositionally biased toward polar residues. Residues 130-379 (SLMSPPLTNS…GGYKFRWVPS (250 aa)) form a necessary and sufficient for proper nuclear localization region. The interval 171–241 (PPPTEQYWKE…SVLDKLMITQ (71 aa)) is necessary and sufficient for interaction with GMNN and sufficient for homodimerization. Residues 175 to 223 (EQYWKEVADQNQRALGTALIENNQLHVTLTQKQEEIASLRERNVQLKEL) are a coiled coil. Positions 291–309 (NRDPKRPRLQPEPDSKDCS) are enriched in basic and acidic residues. Residues 291 to 312 (NRDPKRPRLQPEPDSKDCSSRN) are disordered.

It belongs to the geminin family. Heterodimer (via coiled-coil domain) with GMNN (via coiled-coil domain); targets GMNN to the nucleus. Can form homodimers (in vitro, via coiled-coil domain), but these are much less stable than the heterodimer formed with GMNN.

Its subcellular location is the nucleus. Transcription regulator specifically required for multiciliate cell differentiation. Acts in a multiprotein complex containing E2F4 and E2F5 that binds and activates genes required for centriole biogenesis. Required for the deuterosome-mediated acentriolar pathway. Plays a role in mitotic cell cycle progression by promoting cell cycle exit. Modulates GMNN activity by reducing its affinity for CDT1. This Mus musculus (Mouse) protein is Multicilin (Mcidas).